A 430-amino-acid chain; its full sequence is Tol-Pal system protein TolB (430 aa).

Residues 1–21 (MKQAFRVALGFLVLWASVLHA) form the signal peptide.

It belongs to the TolB family. The Tol-Pal system is composed of five core proteins: the inner membrane proteins TolA, TolQ and TolR, the periplasmic protein TolB and the outer membrane protein Pal. They form a network linking the inner and outer membranes and the peptidoglycan layer.

The protein resides in the periplasm. Its function is as follows. Part of the Tol-Pal system, which plays a role in outer membrane invagination during cell division and is important for maintaining outer membrane integrity. TolB occupies a key intermediary position in the Tol-Pal system because it communicates directly with both membrane-embedded components, Pal in the outer membrane and TolA in the inner membrane. This chain is Tol-Pal system protein TolB, found in Yersinia enterocolitica serotype O:8 / biotype 1B (strain NCTC 13174 / 8081).